The following is a 420-amino-acid chain: Probable protein phosphatase 2C 76 (420 aa).

Residues 101–347 form the PPM-type phosphatase domain; that stretch reads SCGYCSFRGK…DNITCIVVKF (247 aa). Residues aspartate 137, glycine 138, aspartate 299, and aspartate 338 each contribute to the Mn(2+) site. The disordered stretch occupies residues 353-420; it reads ESPKIETNAM…PETKGEKAGE (68 aa). Positions 403-420 are enriched in basic and acidic residues; the sequence is PDPKPETEPETKGEKAGE.

The protein belongs to the PP2C family. It depends on Mg(2+) as a cofactor. Mn(2+) is required as a cofactor.

The enzyme catalyses O-phospho-L-seryl-[protein] + H2O = L-seryl-[protein] + phosphate. It catalyses the reaction O-phospho-L-threonyl-[protein] + H2O = L-threonyl-[protein] + phosphate. In Arabidopsis thaliana (Mouse-ear cress), this protein is Probable protein phosphatase 2C 76.